The primary structure comprises 455 residues: ATP-dependent protease ATPase subunit HslU (455 aa).

Residues Val-23, 65 to 70 (GVGKTE), Asp-266, Glu-333, and Arg-405 each bind ATP.

Belongs to the ClpX chaperone family. HslU subfamily. As to quaternary structure, a double ring-shaped homohexamer of HslV is capped on each side by a ring-shaped HslU homohexamer. The assembly of the HslU/HslV complex is dependent on binding of ATP.

The protein localises to the cytoplasm. Its function is as follows. ATPase subunit of a proteasome-like degradation complex; this subunit has chaperone activity. The binding of ATP and its subsequent hydrolysis by HslU are essential for unfolding of protein substrates subsequently hydrolyzed by HslV. HslU recognizes the N-terminal part of its protein substrates and unfolds these before they are guided to HslV for hydrolysis. In Xanthomonas oryzae pv. oryzae (strain MAFF 311018), this protein is ATP-dependent protease ATPase subunit HslU.